Consider the following 269-residue polypeptide: Shikimate dehydrogenase (NADP(+)) (269 aa).

Shikimate is bound by residues 15-17 (SLS) and T62. The active-site Proton acceptor is the K66. Residues N86 and D99 each coordinate shikimate. NADP(+)-binding positions include 123–127 (GAGGA), 146–151 (NRTTAK), and L213. Y215 contacts shikimate. G236 contributes to the NADP(+) binding site.

Belongs to the shikimate dehydrogenase family. In terms of assembly, homodimer.

The enzyme catalyses shikimate + NADP(+) = 3-dehydroshikimate + NADPH + H(+). It functions in the pathway metabolic intermediate biosynthesis; chorismate biosynthesis; chorismate from D-erythrose 4-phosphate and phosphoenolpyruvate: step 4/7. Functionally, involved in the biosynthesis of the chorismate, which leads to the biosynthesis of aromatic amino acids. Catalyzes the reversible NADPH linked reduction of 3-dehydroshikimate (DHSA) to yield shikimate (SA). The chain is Shikimate dehydrogenase (NADP(+)) from Methanocella arvoryzae (strain DSM 22066 / NBRC 105507 / MRE50).